Reading from the N-terminus, the 141-residue chain is Mitochondrial import inner membrane translocase subunit tim16 (141 aa).

The segment at 59–117 is J-like; it reads EACKILNVNKPADGTAANMEEVMERFKRLFDANDPEKGGSFYLQSKVVRARERLEAEIK. Residues 119–141 form a disordered region; that stretch reads KMEEKQAEEEVKEGWNPKIYKDR.

It belongs to the TIM16/PAM16 family. Heterodimer with tim14/pam18. Component of the PAM complex, at least composed of hsp70-5/ssc1, grpe/mge1, tim44, un-4/pam16, pam17 and tim14/pam18.

It localises to the mitochondrion inner membrane. In terms of biological role, essential component of the PAM complex, a complex required for the translocation of transit peptide-containing proteins from the inner membrane into the mitochondrial matrix in an ATP-dependent manner. In the complex, it is required to regulate activity of mtHSP70 (hsp70-5) via its interaction with tim14/pam18. May act by positioning tim14/pam18 in juxtaposition to mtHSP70 at the translocon to maximize ATPase stimulation. The protein is Mitochondrial import inner membrane translocase subunit tim16 (un-4) of Neurospora crassa (strain ATCC 24698 / 74-OR23-1A / CBS 708.71 / DSM 1257 / FGSC 987).